A 599-amino-acid polypeptide reads, in one-letter code: Beta-(1--&gt;2)glucan export ATP-binding/permease protein NdvA (599 aa).

Positions 21–311 constitute an ABC transmembrane type-1 domain; that stretch reads GWILAVANLL…VVNFINNVLM (291 aa). 6 helical membrane passes run 22–42, 68–88, 146–166, 168–188, 254–274, and 276–296; these read WILAVANLLLATAQFAEPILF, LLGAWVGFGLFTIMCSALVAL, EHFAAILSLVVLLPLSLYINW, LAILLFVLCIVFTVLTTLVVH, VITRASTTITVLSIFALGIYL, and QQGLTSVGEIVMFVSFATLLI. Positions 345–579 constitute an ABC transporter domain; sequence VEFQNVSFSY…GGAFAQLARA (235 aa). 378–385 provides a ligand contact to ATP; it reads GATGAGKS.

This sequence belongs to the ABC transporter superfamily. Beta-(1--&gt;2)glucan exporter (TC 3.A.1.108.1) family. As to quaternary structure, homodimer.

The protein localises to the cell inner membrane. It carries out the reaction [(1-&gt;2)-beta-D-glucosyl](n)(in) + ATP + H2O = [(1-&gt;2)-beta-D-glucosyl](n)(out) + ADP + phosphate + H(+). In terms of biological role, involved in beta-(1--&gt;2)glucan export. Transmembrane domains (TMD) form a pore in the inner membrane and the ATP-binding domain (NBD) is responsible for energy generation. The protein is Beta-(1--&gt;2)glucan export ATP-binding/permease protein NdvA of Rhodopseudomonas palustris (strain ATCC BAA-98 / CGA009).